We begin with the raw amino-acid sequence, 99 residues long: Large ribosomal subunit protein uL23 (99 aa).

The protein belongs to the universal ribosomal protein uL23 family. In terms of assembly, part of the 50S ribosomal subunit. Contacts protein L29, and trigger factor when it is bound to the ribosome.

Its function is as follows. One of the early assembly proteins it binds 23S rRNA. One of the proteins that surrounds the polypeptide exit tunnel on the outside of the ribosome. Forms the main docking site for trigger factor binding to the ribosome. The polypeptide is Large ribosomal subunit protein uL23 (Xanthomonas axonopodis pv. citri (strain 306)).